Here is a 389-residue protein sequence, read N- to C-terminus: 23S rRNA (uracil(747)-C(5))-methyltransferase RlmC (389 aa).

Positions 12, 20, 23, and 99 each coordinate [4Fe-4S] cluster. Gln-224, Phe-253, Glu-274, and Asn-321 together coordinate S-adenosyl-L-methionine. Cys-348 serves as the catalytic Nucleophile.

This sequence belongs to the class I-like SAM-binding methyltransferase superfamily. RNA M5U methyltransferase family. RlmC subfamily.

The enzyme catalyses uridine(747) in 23S rRNA + S-adenosyl-L-methionine = 5-methyluridine(747) in 23S rRNA + S-adenosyl-L-homocysteine + H(+). Functionally, catalyzes the formation of 5-methyl-uridine at position 747 (m5U747) in 23S rRNA. The polypeptide is 23S rRNA (uracil(747)-C(5))-methyltransferase RlmC (Shewanella sp. (strain W3-18-1)).